We begin with the raw amino-acid sequence, 230 residues long: Endonuclease NucS (230 aa).

The protein belongs to the NucS endonuclease family.

The protein resides in the cytoplasm. Functionally, cleaves both 3' and 5' ssDNA extremities of branched DNA structures. This is Endonuclease NucS from Corynebacterium efficiens (strain DSM 44549 / YS-314 / AJ 12310 / JCM 11189 / NBRC 100395).